Consider the following 159-residue polypeptide: Eukaryotic translation initiation factor 5A-3 (159 aa).

Positions 1-12 (MSDEEHQFESKA) are enriched in basic and acidic residues. Residues 1-21 (MSDEEHQFESKADAGASKTYP) form a disordered region. Lys-52 is modified (hypusine).

The protein belongs to the eIF-5A family. Post-translationally, lys-52 undergoes hypusination, a unique post-translational modification that consists in the addition of a butylamino group from spermidine to lysine side chain, leading to the formation of the unusual amino acid hypusine. eIF-5As are the only known proteins to undergo this modification, which is essential for their function.

Its function is as follows. Translation factor that promotes translation elongation and termination, particularly upon ribosome stalling at specific amino acid sequence contexts. Binds between the exit (E) and peptidyl (P) site of the ribosome and promotes rescue of stalled ribosome: specifically required for efficient translation of polyproline-containing peptides as well as other motifs that stall the ribosome. Acts as a ribosome quality control (RQC) cofactor by joining the RQC complex to facilitate peptidyl transfer during CAT tailing step. The chain is Eukaryotic translation initiation factor 5A-3 from Solanum lycopersicum (Tomato).